Here is a 381-residue protein sequence, read N- to C-terminus: Tryptophan--tRNA ligase (381 aa).

The 'HIGH' region signature appears at Pro-82–His-90. Residues Lys-254–Ser-258 carry the 'KMSKS' region motif.

The protein belongs to the class-I aminoacyl-tRNA synthetase family.

The protein resides in the cytoplasm. It carries out the reaction tRNA(Trp) + L-tryptophan + ATP = L-tryptophyl-tRNA(Trp) + AMP + diphosphate + H(+). The protein is Tryptophan--tRNA ligase of Sulfolobus acidocaldarius (strain ATCC 33909 / DSM 639 / JCM 8929 / NBRC 15157 / NCIMB 11770).